Here is a 1156-residue protein sequence, read N- to C-terminus: ATP-dependent RNA helicase glh-4 (1156 aa).

4 disordered regions span residues 1–81 (MSFS…GAPS), 194–213 (TGVG…GQQP), 231–423 (SSSG…DSST), and 436–522 (HRAS…SGLG). The segment covering 12 to 22 (AEVKVAEDVPE) has biased composition (basic and acidic residues). The span at 24 to 34 (NVPPPVEPPRA) shows a compositional bias: pro residues. Polar residues-rich tracts occupy residues 60–73 (ITTS…TTPK), 194–211 (TGVG…SFGQ), and 243–258 (TESS…TSQP). The segment covering 259-281 (GFGGDSSTGFGSGLKAGFGGHGA) has biased composition (gly residues). Over residues 307-319 (ASSSNESAFGQQS) the composition is skewed to polar residues. Composition is skewed to gly residues over residues 321–332 (GFGGATKNGFGG) and 342–358 (SKAG…GGQK). Polar residues-rich tracts occupy residues 362 to 371 (TESSGFPTKE) and 395 to 406 (PSTTDSSSGQQT). The span at 408–423 (GFGGASKPGFGGDSST) shows a compositional bias: gly residues. Polar residues-rich tracts occupy residues 440–451 (TAENSGLPTETT) and 464–476 (ASSS…GQQS). Gly residues predominate over residues 478–489 (GFGGATKNGFGG). 5 CCHC-type zinc fingers span residues 570-587 (RGCH…ECDK), 593-610 (FPCR…DCDQ), 616-633 (GPCR…DCDQ), 639-656 (GPCR…DCQN), and 665-682 (EPCR…ECPT). Residues 736 to 764 (SFDGFKILPQDLHDNLKRMKMNRPTPIQR) carry the Q motif motif. In terms of domain architecture, Helicase ATP-binding spans 767–951 (FFPIMHGNDV…LPKFVKEGYT (185 aa)). Position 780–787 (780–787 (AHTGSGKT)) interacts with ATP. Positions 897 to 900 (DEAD) match the DEAD box motif. The 154-residue stretch at 986-1139 (GIDENTVTLL…EVPEWLTEGA (154 aa)) folds into the Helicase C-terminal domain. Residues 1135–1156 (LTEGAGHQEEGGDDWNEQEQEW) are disordered. Over residues 1145 to 1156 (GGDDWNEQEQEW) the composition is skewed to acidic residues.

It belongs to the DEAD box helicase family. DDX4/VASA subfamily. In terms of assembly, interacts (via C-terminus) with kgb-1.

The catalysed reaction is ATP + H2O = ADP + phosphate + H(+). Its function is as follows. Probable ATP-binding RNA helicase. May act redundantly with the P-granule component glh-1 to regulate the formation of the granular structure of P-granules in embryos. May protect somatic cells from excessive apoptosis during normal development. The chain is ATP-dependent RNA helicase glh-4 from Caenorhabditis elegans.